The chain runs to 545 residues: Methionine--tRNA ligase (545 aa).

A 'HIGH' region motif is present at residues 12 to 22 (PYANGSLHIGH). 4 residues coordinate Zn(2+): C143, C146, C156, and C159. The 'KMSKS' region motif lies at 329–333 (KLSKS). K332 provides a ligand contact to ATP.

It belongs to the class-I aminoacyl-tRNA synthetase family. MetG type 1 subfamily. Monomer. Zn(2+) is required as a cofactor.

It localises to the cytoplasm. It carries out the reaction tRNA(Met) + L-methionine + ATP = L-methionyl-tRNA(Met) + AMP + diphosphate. Its function is as follows. Is required not only for elongation of protein synthesis but also for the initiation of all mRNA translation through initiator tRNA(fMet) aminoacylation. This chain is Methionine--tRNA ligase (metG), found in Buchnera aphidicola subsp. Baizongia pistaciae (strain Bp).